Here is a 239-residue protein sequence, read N- to C-terminus: Ribonuclease PH (239 aa).

Residues Arg-86 and 124–126 (GTR) contribute to the phosphate site.

Belongs to the RNase PH family. Homohexameric ring arranged as a trimer of dimers.

It catalyses the reaction tRNA(n+1) + phosphate = tRNA(n) + a ribonucleoside 5'-diphosphate. Functionally, phosphorolytic 3'-5' exoribonuclease that plays an important role in tRNA 3'-end maturation. Removes nucleotide residues following the 3'-CCA terminus of tRNAs; can also add nucleotides to the ends of RNA molecules by using nucleoside diphosphates as substrates, but this may not be physiologically important. Probably plays a role in initiation of 16S rRNA degradation (leading to ribosome degradation) during starvation. The protein is Ribonuclease PH of Rickettsia bellii (strain RML369-C).